Consider the following 407-residue polypeptide: Phosphonoacetate hydrolase (407 aa).

Residues Asp25, Thr64, Asp202, His206, Asp241, His242, and His368 each coordinate Zn(2+). Substrate is bound by residues Thr64 and Asp202. Substrate is bound by residues His242 and His368.

This sequence belongs to the alkaline phosphatase family. PhnA subfamily. Homodimer. The cofactor is Zn(2+).

The catalysed reaction is phosphonoacetate + H2O = acetate + phosphate + H(+). Functionally, specifically hydrolyzes phosphonoacetate. Does not have activity on other organophosphonates or acetates. This is Phosphonoacetate hydrolase from Pseudomonas cedrina.